The sequence spans 208 residues: Small ribosomal subunit protein uS4 (208 aa).

Positions 31–51 (SALDKRAYGPGQHGQRRAKTS) are disordered. The region spanning 98 to 160 (RRLDNVVYRM…TKSNSQVVRA (63 aa)) is the S4 RNA-binding domain.

It belongs to the universal ribosomal protein uS4 family. Part of the 30S ribosomal subunit. Contacts protein S5. The interaction surface between S4 and S5 is involved in control of translational fidelity.

Functionally, one of the primary rRNA binding proteins, it binds directly to 16S rRNA where it nucleates assembly of the body of the 30S subunit. In terms of biological role, with S5 and S12 plays an important role in translational accuracy. This is Small ribosomal subunit protein uS4 from Helicobacter pylori (strain ATCC 700392 / 26695) (Campylobacter pylori).